The chain runs to 270 residues: Urease accessory protein UreD (270 aa).

This sequence belongs to the UreD family. UreD, UreF and UreG form a complex that acts as a GTP-hydrolysis-dependent molecular chaperone, activating the urease apoprotein by helping to assemble the nickel containing metallocenter of UreC. The UreE protein probably delivers the nickel.

The protein localises to the cytoplasm. Its function is as follows. Required for maturation of urease via the functional incorporation of the urease nickel metallocenter. This Microcystis aeruginosa (strain NIES-843 / IAM M-2473) protein is Urease accessory protein UreD.